We begin with the raw amino-acid sequence, 682 residues long: DNA ligase (682 aa).

Residues 42–46, 88–89, and Glu121 contribute to the NAD(+) site; these read DAAYD and SL. The N6-AMP-lysine intermediate role is filled by Lys123. 4 residues coordinate NAD(+): Arg144, Glu180, Lys291, and Lys315. Residues Cys409, Cys412, Cys427, and Cys433 each coordinate Zn(2+). The BRCT domain occupies 601 to 682; the sequence is AAGGALAGKT…FRSLAGLPPG (82 aa).

Belongs to the NAD-dependent DNA ligase family. LigA subfamily. It depends on Mg(2+) as a cofactor. The cofactor is Mn(2+).

It catalyses the reaction NAD(+) + (deoxyribonucleotide)n-3'-hydroxyl + 5'-phospho-(deoxyribonucleotide)m = (deoxyribonucleotide)n+m + AMP + beta-nicotinamide D-nucleotide.. Its function is as follows. DNA ligase that catalyzes the formation of phosphodiester linkages between 5'-phosphoryl and 3'-hydroxyl groups in double-stranded DNA using NAD as a coenzyme and as the energy source for the reaction. It is essential for DNA replication and repair of damaged DNA. In Acidiphilium cryptum (strain JF-5), this protein is DNA ligase.